A 296-amino-acid polypeptide reads, in one-letter code: Mitochondrial arginine transporter BAC2 (296 aa).

3 Solcar repeats span residues 13–93 (GREF…FSRS), 104–187 (PSYR…VRER), and 198–282 (ENLR…ALRC). 6 helical membrane passes run 16–36 (FVAG…LDTL), 70–90 (AAPL…YAIF), 110–130 (ALGG…VELI), 162–181 (GLTI…FWTY), 204–224 (LVAG…LDVV), and 260–280 (TAVA…EVAL).

It belongs to the mitochondrial carrier (TC 2.A.29) family. In terms of tissue distribution, high expression in flowers, stamens, petals and pollen. Expressed in roots, leaves and stems.

Its subcellular location is the mitochondrion inner membrane. Its activity is regulated as follows. Inhibited by mercuric chloride. In terms of biological role, mitochondrial arginine transporter that catalyzes the counter-exchange of arginine with lysine, ornithine, arginine, histidine and citrulline. Substrate preference in reconstituted proteoliposomes is arginine &gt; homoarginine &gt; citrulline &gt; histidine &gt; lysine &gt; ornithine. May be involved in the delivery of arginine, released from seed reserves, to mitochondrial arginase and the export of ornithine. May contribute to proline accumulation in response to hyperosmotic stress. This chain is Mitochondrial arginine transporter BAC2 (BAC2), found in Arabidopsis thaliana (Mouse-ear cress).